Consider the following 454-residue polypeptide: Histidine--tRNA ligase (454 aa).

This sequence belongs to the class-II aminoacyl-tRNA synthetase family. In terms of assembly, homodimer.

Its subcellular location is the cytoplasm. It catalyses the reaction tRNA(His) + L-histidine + ATP = L-histidyl-tRNA(His) + AMP + diphosphate + H(+). This is Histidine--tRNA ligase from Bacteroides fragilis (strain YCH46).